We begin with the raw amino-acid sequence, 204 residues long: Peptide chain release factor homolog (204 aa).

The segment at 2 to 98 (ILLQLSSAQG…KNWFLGIGRF (97 aa)) is rRNA-recognition domain, N-terminus. The segment at 99-107 (TADEQEQSD) is linker 1. The interval 108-161 (AIRYETLRSSGPGGQHVNKTDSAVRATHLASGISVKVQSERSQHANKRLARLLI) is GGQ domain. The GGQ motif signature appears at 120 to 122 (GGQ). Residues 162 to 179 (AWKLEQQQQENSAALKSQ) are linker 2. Residues 180–204 (RRMFHHQIERGNPRRTFTGMAFIEG) are rRNA-recognition domain, C-terminus.

The protein belongs to the prokaryotic/mitochondrial release factor family. Found in the A site of damaged 70S ribosomes, but not in undamaged ribosomes. Contacts (damaged) 16S rRNA, 23S rRNA and ribosomal protein uS12, but not mRNA.

Its function is as follows. Peptide chain release-like factor that acts on 70S ribosomes with specific damage to their decoding center (cleavage of 16S rRNA between adenine-1493 and guanosine-1494, E.coli 16S rRNA numbering). Probably acts as a peptidyl-tRNA hydrolase, allowing release of the nascent chain and dissociation of the 30S and 50S subunits. Can release mRNA as short as 19 nucleotides (nt, mRNA-19, which has a single amino acid in the P-site and only a single nt in the A-site) from the ribosome. This specific cleavage is inflicted by CdiA (ECL_04451) or by colicin E3-type (ColE3) proteins. In vivo the PrfH-RtcB2 pair restores growth in the presence of ribotoxins that specifically create this damage. In Escherichia coli (strain ATCC 25922 / DSM 1103 / LMG 8223 / NCIMB 12210 / NCTC 12241 / WDCM 00013 / Seattle 1946), this protein is Peptide chain release factor homolog.